The sequence spans 270 residues: uncharacterized protein (270 aa).

This is an uncharacterized protein from Bacillus anthracis.